Reading from the N-terminus, the 2476-residue chain is Non-reducing polyketide synthase pkdA (2476 aa).

Residues 22 to 230 (PNLNDAYLQS…VISEARLATL (209 aa)) are N-terminal acylcarrier protein transacylase domain (SAT). Cysteine 142 functions as the Nucleophile; for transacylase activity in the catalytic mechanism. The active-site Proton donor/acceptor; for transacylase activity is histidine 261. In terms of domain architecture, Ketosynthase family 3 (KS3) spans 388–805 (DESIAVVGMA…GSNASLVVTQ (418 aa)). Residues cysteine 554, histidine 689, and histidine 728 each act as for beta-ketoacyl synthase activity in the active site. The tract at residues 919–1204 (FGGQRSSFVG…GSGVTNLASR (286 aa)) is malonyl-CoA:ACP transacylase (MAT). The segment at 1290-1417 (QKGLWTFVGY…GRITFQTPKQ (128 aa)) is N-terminal hotdog fold. One can recognise a PKS/mFAS DH domain in the interval 1290–1592 (QKGLWTFVGY…FVEVSIAGMS (303 aa)). The interval 1321 to 1590 (YVSAHVIAQT…LHFVEVSIAG (270 aa)) is product template (PT) domain. The Proton acceptor; for dehydratase activity role is filled by histidine 1325. A C-terminal hotdog fold region spans residues 1445 to 1592 (QTIQGSRNIY…FVEVSIAGMS (148 aa)). The active-site Proton donor; for dehydratase activity is aspartate 1501. The segment at 1626–1649 (DVSKNEKDAKAPSKKKESTSKSPG) is disordered. One can recognise a Carrier domain in the interval 1650 to 1724 (HDILARVRTL…SLVKCIGANM (75 aa)). Serine 1684 carries the O-(pantetheine 4'-phosphoryl)serine modification. The tract at residues 1727-1766 (SDTSRTGDDSSDDLETASAESETSSGINNEDSHNIDRQQI) is disordered. Over residues 1742–1751 (TASAESETSS) the composition is skewed to low complexity. A methyltransferase (CMeT) domain region spans residues 1881 to 2030 (ELLRQYPEHA…DCEKTPSSHL (150 aa)). The interval 2094–2340 (VTGATGSLGS…SWCPVDDVAA (247 aa)) is NADPH-binding domain.

Pantetheine 4'-phosphate serves as cofactor.

It carries out the reaction propanoyl-CoA + 3 malonyl-CoA + AH2 + 2 S-adenosyl-L-methionine + H(+) = 2-ethyl-4,6-dihydroxy-3,5-dimethylbenzaldehyde + A + 2 S-adenosyl-L-homocysteine + 3 CO2 + 4 CoA + H2O. It functions in the pathway secondary metabolite biosynthesis. Functionally, non-reducing polyketide synthase that synthesizes 6-ethyl-2,4-dihydroxy-3,5-dimethylbenzaldehyde via condensation of one propanoyl-CoA starter unit with 3 malonyl-CoA units, as well as 2 methylation steps. This chain is Non-reducing polyketide synthase pkdA, found in Emericella nidulans (strain FGSC A4 / ATCC 38163 / CBS 112.46 / NRRL 194 / M139) (Aspergillus nidulans).